A 444-amino-acid chain; its full sequence is Putative cytochrome P450 120 (444 aa).

Cysteine 391 is a binding site for heme.

This sequence belongs to the cytochrome P450 family. Heme is required as a cofactor.

The sequence is that of Putative cytochrome P450 120 (cyp120) from Synechocystis sp. (strain ATCC 27184 / PCC 6803 / Kazusa).